The sequence spans 213 residues: Uridine kinase (213 aa).

15 to 22 (GASASGKS) provides a ligand contact to ATP.

This sequence belongs to the uridine kinase family.

The protein resides in the cytoplasm. It carries out the reaction uridine + ATP = UMP + ADP + H(+). The enzyme catalyses cytidine + ATP = CMP + ADP + H(+). It functions in the pathway pyrimidine metabolism; CTP biosynthesis via salvage pathway; CTP from cytidine: step 1/3. The protein operates within pyrimidine metabolism; UMP biosynthesis via salvage pathway; UMP from uridine: step 1/1. This is Uridine kinase from Klebsiella pneumoniae (strain 342).